Here is a 199-residue protein sequence, read N- to C-terminus: Peptidyl-tRNA hydrolase (199 aa).

A tRNA-binding site is contributed by Y15. H20 functions as the Proton acceptor in the catalytic mechanism. 3 residues coordinate tRNA: Y66, N68, and N114.

Belongs to the PTH family. Monomer.

It localises to the cytoplasm. It catalyses the reaction an N-acyl-L-alpha-aminoacyl-tRNA + H2O = an N-acyl-L-amino acid + a tRNA + H(+). Hydrolyzes ribosome-free peptidyl-tRNAs (with 1 or more amino acids incorporated), which drop off the ribosome during protein synthesis, or as a result of ribosome stalling. In terms of biological role, catalyzes the release of premature peptidyl moieties from peptidyl-tRNA molecules trapped in stalled 50S ribosomal subunits, and thus maintains levels of free tRNAs and 50S ribosomes. This Burkholderia ambifaria (strain MC40-6) protein is Peptidyl-tRNA hydrolase.